Consider the following 79-residue polypeptide: Acyl carrier protein (79 aa).

The Carrier domain occupies 2–77 (SEIGERVKKI…DATKFLEKNA (76 aa)). Ser37 is subject to O-(pantetheine 4'-phosphoryl)serine.

It belongs to the acyl carrier protein (ACP) family. 4'-phosphopantetheine is transferred from CoA to a specific serine of apo-ACP by AcpS. This modification is essential for activity because fatty acids are bound in thioester linkage to the sulfhydryl of the prosthetic group.

The protein resides in the cytoplasm. Its pathway is lipid metabolism; fatty acid biosynthesis. Its function is as follows. Carrier of the growing fatty acid chain in fatty acid biosynthesis. The protein is Acyl carrier protein of Nitrobacter hamburgensis (strain DSM 10229 / NCIMB 13809 / X14).